Reading from the N-terminus, the 495-residue chain is ATP synthase subunit beta (495 aa).

178 to 185 is an ATP binding site; it reads GGAGVGKT.

It belongs to the ATPase alpha/beta chains family. F-type ATPases have 2 components, CF(1) - the catalytic core - and CF(0) - the membrane proton channel. CF(1) has five subunits: alpha(3), beta(3), gamma(1), delta(1), epsilon(1). CF(0) has three main subunits: a(1), b(2) and c(9-12). The alpha and beta chains form an alternating ring which encloses part of the gamma chain. CF(1) is attached to CF(0) by a central stalk formed by the gamma and epsilon chains, while a peripheral stalk is formed by the delta and b chains.

The protein localises to the cell membrane. It catalyses the reaction ATP + H2O + 4 H(+)(in) = ADP + phosphate + 5 H(+)(out). Functionally, produces ATP from ADP in the presence of a proton gradient across the membrane. The catalytic sites are hosted primarily by the beta subunits. This is ATP synthase subunit beta from Bifidobacterium animalis subsp. lactis (strain AD011).